We begin with the raw amino-acid sequence, 254 residues long: DNA repair protein RecO (254 aa).

The protein belongs to the RecO family.

Involved in DNA repair and RecF pathway recombination. The chain is DNA repair protein RecO from Agrobacterium fabrum (strain C58 / ATCC 33970) (Agrobacterium tumefaciens (strain C58)).